We begin with the raw amino-acid sequence, 613 residues long: Protein translocase subunit SecD (613 aa).

The next 6 membrane-spanning stretches (helical) occupy residues 10–30 (ALVVAVAILSIYQLVPSWFYF), 452–472 (KGTLAALVGLALVVVFMVVYY), 477–497 (LVADVALALNGLLVLAVMSMI), 503–523 (LPGIAGFVLTLGMAVDANVLI), 548–568 (VFWTIVDSHVTTLVAGVVLFQ), and 576–596 (GFAVTLIIGLVASMFTSIVVT).

Belongs to the SecD/SecF family. SecD subfamily. As to quaternary structure, forms a complex with SecF. Part of the essential Sec protein translocation apparatus which comprises SecA, SecYEG and auxiliary proteins SecDF-YajC and YidC.

The protein localises to the cell inner membrane. Part of the Sec protein translocase complex. Interacts with the SecYEG preprotein conducting channel. SecDF uses the proton motive force (PMF) to complete protein translocation after the ATP-dependent function of SecA. This Anaeromyxobacter dehalogenans (strain 2CP-C) protein is Protein translocase subunit SecD.